A 360-amino-acid chain; its full sequence is Protein phosphatase 1 regulatory subunit 7 (360 aa).

The segment at 1 to 63 (MAAERGAGQQ…RGAEDPEEEH (63 aa)) is disordered. Alanine 2 is subject to N-acetylalanine. 5 positions are modified to phosphoserine: serine 12, serine 24, serine 27, serine 44, and serine 47. A compositionally biased stretch (basic and acidic residues) spans 17-34 (EVDRRVESEESGDEEGKK). LRR repeat units lie at residues 77–98 (DAED…EVLK), 99–120 (KVKS…DELQ), 121–142 (SLRE…EALT), 143–164 (ELEV…DKLT), 165–186 (QLKK…STLQ), 187–208 (QLQM…DTLT), 209–230 (NLES…DALS), 231–252 (NLTV…QNLV), 253–274 (NLRE…ENNN), 275–296 (KLTM…SHLT), and 297–318 (ELQE…DELK). Residue serine 322 is modified to Phosphoserine. The 30-residue stretch at 331 to 360 (NPLQKDPQYRRKVMLALPSVRQIDATFVRF) folds into the LRRCT domain.

Belongs to the SDS22 family. As to quaternary structure, interacts with PPP1CA, PPP1CB and PPP1CC/PPP1G.

It is found in the nucleus. Functionally, regulatory subunit of protein phosphatase 1. The protein is Protein phosphatase 1 regulatory subunit 7 (Ppp1r7) of Rattus norvegicus (Rat).